The following is a 222-amino-acid chain: Probable nicotinate-nucleotide adenylyltransferase (222 aa).

Belongs to the NadD family.

It carries out the reaction nicotinate beta-D-ribonucleotide + ATP + H(+) = deamido-NAD(+) + diphosphate. Its pathway is cofactor biosynthesis; NAD(+) biosynthesis; deamido-NAD(+) from nicotinate D-ribonucleotide: step 1/1. In terms of biological role, catalyzes the reversible adenylation of nicotinate mononucleotide (NaMN) to nicotinic acid adenine dinucleotide (NaAD). The sequence is that of Probable nicotinate-nucleotide adenylyltransferase from Xylella fastidiosa (strain M12).